We begin with the raw amino-acid sequence, 379 residues long: L-lactate dehydrogenase (379 aa).

One can recognise an FMN hydroxy acid dehydrogenase domain in the interval 1 to 379; the sequence is MIISSSTDYR…ISPDSLVRGL (379 aa). Tyr24 lines the substrate pocket. Positions 106 and 127 each coordinate FMN. Tyr129 provides a ligand contact to substrate. Residue Thr155 participates in FMN binding. Residue Arg164 participates in substrate binding. Lys251 contributes to the FMN binding site. His275 acts as the Proton acceptor in catalysis. Residue Arg278 participates in substrate binding. 306-330 provides a ligand contact to FMN; it reads DSGIRSGLDVVRMIAQGADGVLIGR.

This sequence belongs to the FMN-dependent alpha-hydroxy acid dehydrogenase family. Requires FMN as cofactor.

It is found in the cell inner membrane. The enzyme catalyses (S)-lactate + A = pyruvate + AH2. In terms of biological role, catalyzes the conversion of L-lactate to pyruvate. Is coupled to the respiratory chain. The sequence is that of L-lactate dehydrogenase from Allorhizobium ampelinum (strain ATCC BAA-846 / DSM 112012 / S4) (Agrobacterium vitis (strain S4)).